A 213-amino-acid chain; its full sequence is von Hippel-Lindau disease tumor suppressor (213 aa).

A disordered region spans residues 1-65; it reads MPRRAENWDE…AGRPRPVLRS (65 aa). Positions 8-54 are enriched in acidic residues; that stretch reads WDEAEVGAEEAGVEEYGPEEDGGEESGAEESGPEESGPEELGAEEEM. Repeat copies occupy residues 14–18, 19–23, 24–28, 29–33, 34–38, 39–43, 44–48, and 49–53. An 8 X 5 AA tandem repeats of G-[PAVG]-E-E-[DAYSLE] region spans residues 14–53; the sequence is GAEEAGVEEYGPEEDGGEESGAEESGPEESGPEELGAEEE. The segment at 100 to 155 is involved in binding to CCT complex; the sequence is TLPPGTGRRIHSYRGHLWLFRDAGTHDGLLVNQTELFVPSLNVDGQPIFANITLPV. An interaction with Elongin BC complex region spans residues 157–166; the sequence is TLKERCLQVV.

Belongs to the VHL family. Component of the VCB (VHL-Elongin BC-CUL2) complex; this complex acts as a ubiquitin-ligase E3 and directs proteasome-dependent degradation of targeted proteins. Interacts with CUL2; this interaction is dependent on the integrity of the trimeric VCB complex. Interacts (via the beta domain) with HIF1A (via the NTAD domain); this interaction mediates degradation of HIF1A in normoxia and, in hypoxia, prevents ubiquitination and degradation of HIF1A by mediating hypoxia-induced translocation to the nucleus, a process which requires a hypoxia-dependent regulatory signal. Interacts with ADRB2; the interaction, in normoxia, is dependent on hydroxylation of ADRB2 and the subsequent VCB-mediated ubiquitination and degradation of ADRB2. Under hypoxia, hydroxylation, interaction with VHL, ubiquitination and subsequent degradation of ADRB2 are dramatically decreased. Interacts with RNF139, USP33 and JADE1. Found in a complex composed of LIMD1, VHL, EGLN1/PHD2, ELOB and CUL2. Isoform 1 and isoform 3 interact with LIMD1 (via LIM zinc-binding 2), AJUBA (via LIM domains) and WTIP (via LIM domains). Interacts with EPAS1. Interacts with CARD9. Interacts with DCUN1D1 independently of CUL2; this interaction engages DCUN1D1 in the VCB complex and triggers CUL2 neddylation and consequently cullin ring ligase (CRL) substrates polyubiquitylation. Interacts with ALAS1 (hydroxylated form). Interacts with IGFBP1. As to expression, expressed in the adult and fetal brain and kidney.

The protein resides in the cytoplasm. It is found in the cell membrane. Its subcellular location is the endoplasmic reticulum. It localises to the nucleus. It functions in the pathway protein modification; protein ubiquitination. Functionally, involved in the ubiquitination and subsequent proteasomal degradation via the von Hippel-Lindau ubiquitination complex. Seems to act as a target recruitment subunit in the E3 ubiquitin ligase complex and recruits hydroxylated hypoxia-inducible factor (HIF) under normoxic conditions. Involved in transcriptional repression through interaction with HIF1A, HIF1AN and histone deacetylases. Ubiquitinates, in an oxygen-responsive manner, ADRB2. Acts as a negative regulator of mTORC1 by promoting ubiquitination and degradation of RPTOR. The sequence is that of von Hippel-Lindau disease tumor suppressor (VHL) from Homo sapiens (Human).